Consider the following 98-residue polypeptide: NADH-ubiquinone oxidoreductase chain 4L (98 aa).

Helical transmembrane passes span P2–F22, S29–L49, and I61–V81.

It belongs to the complex I subunit 4L family. As to quaternary structure, core subunit of respiratory chain NADH dehydrogenase (Complex I) which is composed of 45 different subunits.

The protein localises to the mitochondrion inner membrane. It catalyses the reaction a ubiquinone + NADH + 5 H(+)(in) = a ubiquinol + NAD(+) + 4 H(+)(out). In terms of biological role, core subunit of the mitochondrial membrane respiratory chain NADH dehydrogenase (Complex I) which catalyzes electron transfer from NADH through the respiratory chain, using ubiquinone as an electron acceptor. Part of the enzyme membrane arm which is embedded in the lipid bilayer and involved in proton translocation. In Microcebus griseorufus (Gray-brown mouse lemur), this protein is NADH-ubiquinone oxidoreductase chain 4L (MT-ND4L).